The primary structure comprises 121 residues: Basic phospholipase A2 3 (121 aa).

Disulfide bonds link cysteine 26-cysteine 115, cysteine 28-cysteine 44, cysteine 43-cysteine 95, cysteine 49-cysteine 121, cysteine 50-cysteine 88, cysteine 57-cysteine 81, and cysteine 75-cysteine 86. Positions 27, 29, and 31 each coordinate Ca(2+). Histidine 47 is a catalytic residue. Aspartate 48 serves as a coordination point for Ca(2+). Residue aspartate 89 is part of the active site.

The protein belongs to the phospholipase A2 family. Group II subfamily. D49 sub-subfamily. Ca(2+) is required as a cofactor. As to expression, expressed by the venom gland.

Its subcellular location is the secreted. It carries out the reaction a 1,2-diacyl-sn-glycero-3-phosphocholine + H2O = a 1-acyl-sn-glycero-3-phosphocholine + a fatty acid + H(+). In terms of biological role, PLA2 catalyzes the calcium-dependent hydrolysis of the 2-acyl groups in 3-sn-phosphoglycerides. This chain is Basic phospholipase A2 3, found in Daboia russelii (Russel's viper).